We begin with the raw amino-acid sequence, 219 residues long: MDQLEMKKIAARAALQYVKPDTIVGVGSGSTVNCFIDALGEMAGDIKGAVAASKASEERLRALGIEVFSANEVTELDVYIDGADEITPQGYMIKGGGAALTREKIVSSLAKKFICIVDASKQVDVLGSTFALPVEVIPMARSYVARQLVALGGSPEYRESVVTDNGNVILDVYNFKIFEPLKMEHTINNIAGVVTNGIFAQRYANVTIVGTPDGAKIIE.

Substrate contacts are provided by residues 28-31, 81-84, and 94-97; these read SGST, DGAD, and KGGG. E103 (proton acceptor) is an active-site residue. K121 provides a ligand contact to substrate.

This sequence belongs to the ribose 5-phosphate isomerase family. As to quaternary structure, homodimer.

The enzyme catalyses aldehydo-D-ribose 5-phosphate = D-ribulose 5-phosphate. The protein operates within carbohydrate degradation; pentose phosphate pathway; D-ribose 5-phosphate from D-ribulose 5-phosphate (non-oxidative stage): step 1/1. In terms of biological role, catalyzes the reversible conversion of ribose-5-phosphate to ribulose 5-phosphate. This chain is Ribose-5-phosphate isomerase A, found in Glaesserella parasuis serovar 5 (strain SH0165) (Haemophilus parasuis).